A 116-amino-acid polypeptide reads, in one-letter code: Nucleoid-associated protein PMT9312_0020 (116 aa).

The protein belongs to the YbaB/EbfC family. In terms of assembly, homodimer.

It is found in the cytoplasm. The protein resides in the nucleoid. Binds to DNA and alters its conformation. May be involved in regulation of gene expression, nucleoid organization and DNA protection. The polypeptide is Nucleoid-associated protein PMT9312_0020 (Prochlorococcus marinus (strain MIT 9312)).